A 329-amino-acid polypeptide reads, in one-letter code: Delta-aminolevulinic acid dehydratase (329 aa).

Zn(2+)-binding residues include C122, C124, H131, and C132. The active-site Schiff-base intermediate with substrate is the K199. The residue at position 199 (K199) is an N6-succinyllysine. R209 is a 5-aminolevulinate binding site. At S215 the chain carries Phosphoserine. R221 is a binding site for 5-aminolevulinate. Position 223 (C223) interacts with Zn(2+). The Schiff-base intermediate with substrate role is filled by K252. K252 is modified (N6-succinyllysine). 2 residues coordinate 5-aminolevulinate: S279 and Y318.

The protein belongs to the ALAD family. Homooctamer; active form. Homohexamer; low activity form. Requires Zn(2+) as cofactor.

The protein localises to the cytoplasm. It is found in the cytosol. The catalysed reaction is 2 5-aminolevulinate = porphobilinogen + 2 H2O + H(+). It participates in porphyrin-containing compound metabolism; protoporphyrin-IX biosynthesis; coproporphyrinogen-III from 5-aminolevulinate: step 1/4. With respect to regulation, can alternate between a fully active homooctamer and a low-activity homohexamer. A bound magnesium ion may promote the assembly of the fully active homooctamer. The magnesium-binding site is absent in the low-activity homohexamer. Inhibited by compounds that favor the hexameric state. Inhibited by divalent lead ions. The lead ions partially displace the zinc cofactor. Functionally, catalyzes an early step in the biosynthesis of tetrapyrroles. Binds two molecules of 5-aminolevulinate per subunit, each at a distinct site, and catalyzes their condensation to form porphobilinogen. The polypeptide is Delta-aminolevulinic acid dehydratase (ALAD) (Bos taurus (Bovine)).